Consider the following 95-residue polypeptide: Co-chaperonin GroES (95 aa).

It belongs to the GroES chaperonin family. As to quaternary structure, heptamer of 7 subunits arranged in a ring. Interacts with the chaperonin GroEL.

The protein resides in the cytoplasm. Functionally, together with the chaperonin GroEL, plays an essential role in assisting protein folding. The GroEL-GroES system forms a nano-cage that allows encapsulation of the non-native substrate proteins and provides a physical environment optimized to promote and accelerate protein folding. GroES binds to the apical surface of the GroEL ring, thereby capping the opening of the GroEL channel. In Rickettsia typhi (strain ATCC VR-144 / Wilmington), this protein is Co-chaperonin GroES.